Reading from the N-terminus, the 459-residue chain is Chromosomal replication initiator protein DnaA (459 aa).

The segment at 1–83 (MKNAREIWRN…NKLEIHFIEE (83 aa)) is domain I, interacts with DnaA modulators. Residues 83-121 (ESQAHKYAPADGSSNESIAVTETKEQPVLLPSKEEGDLG) form a domain II region. Positions 122-338 (QLNDKYIFET…GALTRVVAYA (217 aa)) are domain III, AAA+ region. ATP is bound by residues G166, G168, K169, and T170. The domain IV, binds dsDNA stretch occupies residues 339–459 (KLVGRPIDPD…IQTLKKALSN (121 aa)).

This sequence belongs to the DnaA family. Oligomerizes as a right-handed, spiral filament on DNA at oriC.

It localises to the cytoplasm. Functionally, plays an essential role in the initiation and regulation of chromosomal replication. ATP-DnaA binds to the origin of replication (oriC) to initiate formation of the DNA replication initiation complex once per cell cycle. Binds the DnaA box (a 9 base pair repeat at the origin) and separates the double-stranded (ds)DNA. Forms a right-handed helical filament on oriC DNA; dsDNA binds to the exterior of the filament while single-stranded (ss)DNA is stabiized in the filament's interior. The ATP-DnaA-oriC complex binds and stabilizes one strand of the AT-rich DNA unwinding element (DUE), permitting loading of DNA polymerase. After initiation quickly degrades to an ADP-DnaA complex that is not apt for DNA replication. Binds acidic phospholipids. The sequence is that of Chromosomal replication initiator protein DnaA from Exiguobacterium sp. (strain ATCC BAA-1283 / AT1b).